Here is a 289-residue protein sequence, read N- to C-terminus: Tumor necrosis factor receptor superfamily member 5 (289 aa).

A signal peptide spans 1-19 (MVSLPRLCALWGCLLTAVH). The Extracellular portion of the chain corresponds to 20-193 (LGQCVTCSDK…VICGLKSRMR (174 aa)). TNFR-Cys repeat units lie at residues 25–60 (TCSDKQYLHDGQCCDLCQPGSRLTSHCTALEKTQCH), 61–103 (PCDS…DTVC), 104–144 (TCKE…TVCH), and 145–187 (PCPV…VICG). 8 cysteine pairs are disulfide-bonded: Cys26–Cys37, Cys38–Cys51, Cys41–Cys59, Cys62–Cys77, Cys83–Cys103, Cys105–Cys119, Cys111–Cys116, and Cys125–Cys143. Asn153 carries N-linked (GlcNAc...) asparagine glycosylation. The helical transmembrane segment at 194-215 (ALLVIPVVMGILITIFGVFLYI) threads the bilayer. Residues 216–289 (KKVVKKPKDN…TDSIALRPLV (74 aa)) are Cytoplasmic-facing. The disordered stretch occupies residues 228-251 (LPPAARRQDPQEMEDYPGHNTAAP).

In terms of assembly, monomer and homodimer. Interacts with TRAF1, TRAF2 and TRAF6. Interacts with TRAF3 and TRAF5. Interacts with TRAF6 and MAP3K8; the interaction is required for ERK activation.

The protein resides in the cell membrane. It is found in the secreted. In terms of biological role, receptor for TNFSF5/CD40LG. Transduces TRAF6- and MAP3K8-mediated signals that activate ERK in macrophages and B cells, leading to induction of immunoglobulin secretion. The polypeptide is Tumor necrosis factor receptor superfamily member 5 (Cd40) (Mus musculus (Mouse)).